The primary structure comprises 180 residues: uncharacterized protein (180 aa).

Coiled coils occupy residues 3–82 and 95–179; these read LKSL…QKIA and REYE…EKYG.

This is an uncharacterized protein from Aquifex aeolicus (strain VF5).